The primary structure comprises 519 residues: NADH-quinone oxidoreductase subunit N (519 aa).

A run of 14 helical transmembrane segments spans residues 22–42, 53–73, 87–107, 141–161, 163–183, 198–218, 242–262, 287–307, 310–330, 336–356, 363–383, 406–426, 442–461, and 483–503; these read LLPMLIVFGVACAGVLVEAFV, VLALGGLVAALIAVVSNTGLP, PTLFIQGTILALSIGALLLIA, TEVFPLAMFAVGGMMLFPAAN, LITAFVALEVLSLPLYLLAGM, YFLLGAFSSAFFVYGLALVYG, IIVGLALIGISLLFKLSGVPF, VAAFGALLRVFFVAFGGLAWD, PVIWGVAIATMVVGAILGITQ, LLAYSSIAHAGFVLTAFAATT, VLFYLVAYGFMTIGAFAIVIL, LVAGIFALFLLAMAGLPPTSG, AGPLVIVGVLASAVTAYYYL, and GALASAAIALGVIVTVVLGIV.

This sequence belongs to the complex I subunit 2 family. As to quaternary structure, NDH-1 is composed of 14 different subunits. Subunits NuoA, H, J, K, L, M, N constitute the membrane sector of the complex.

The protein localises to the cell membrane. The enzyme catalyses a quinone + NADH + 5 H(+)(in) = a quinol + NAD(+) + 4 H(+)(out). Functionally, NDH-1 shuttles electrons from NADH, via FMN and iron-sulfur (Fe-S) centers, to quinones in the respiratory chain. The immediate electron acceptor for the enzyme in this species is believed to be a menaquinone. Couples the redox reaction to proton translocation (for every two electrons transferred, four hydrogen ions are translocated across the cytoplasmic membrane), and thus conserves the redox energy in a proton gradient. The polypeptide is NADH-quinone oxidoreductase subunit N (Acidothermus cellulolyticus (strain ATCC 43068 / DSM 8971 / 11B)).